The sequence spans 498 residues: Putative F-box/FBD/LRR-repeat protein At4g03220 (498 aa).

The F-box domain occupies 23-71; that stretch reads VDRISNLPDSLNHQILLLLPLKSAAQASLLSKRWRSLFLSLPDLDFTSI. LRR repeat units follow at residues 148-172, 175-200, and 235-259; these read SQNL…SSAR, FQKL…FFTD, and SLQL…CFYS. The 51-residue stretch at 416–466 folds into the FBD domain; sequence YWESQAYELESFLNHLEFVEIHGFVECENEMSLAIFLLRHGKALIKMTLRS.

This is Putative F-box/FBD/LRR-repeat protein At4g03220 from Arabidopsis thaliana (Mouse-ear cress).